Consider the following 180-residue polypeptide: tRNA (cytidine(56)-2'-O)-methyltransferase (180 aa).

S-adenosyl-L-methionine contacts are provided by residues Leu-84 and 112-116; that span reads GAEKV.

It belongs to the aTrm56 family. Homodimer.

The protein localises to the cytoplasm. The enzyme catalyses cytidine(56) in tRNA + S-adenosyl-L-methionine = 2'-O-methylcytidine(56) in tRNA + S-adenosyl-L-homocysteine + H(+). In terms of biological role, specifically catalyzes the AdoMet-dependent 2'-O-ribose methylation of cytidine at position 56 in tRNAs. This is tRNA (cytidine(56)-2'-O)-methyltransferase from Haloarcula marismortui (strain ATCC 43049 / DSM 3752 / JCM 8966 / VKM B-1809) (Halobacterium marismortui).